The chain runs to 222 residues: Glutathione S-transferase A4 (222 aa).

The residue at position 1 (methionine 1) is an N-acetylmethionine. The 81-residue stretch at 3 to 83 folds into the GST N-terminal domain; that stretch reads ARPKLHYPNG…YIADKHNLFG (81 aa). Glutathione contacts are provided by residues tyrosine 9, 54 to 55, and 67 to 68; these read QV and QT. The 124-residue stretch at 85–208 folds into the GST C-terminal domain; that stretch reads NLKERTLIDM…EPGSKKKPPP (124 aa). Substrate is bound at residue tyrosine 212.

It belongs to the GST superfamily. Alpha family. Homodimer. As to expression, expressed at a high level in brain, placenta, and skeletal muscle and much lower in lung and liver.

The protein localises to the cytoplasm. The enzyme catalyses RX + glutathione = an S-substituted glutathione + a halide anion + H(+). In terms of biological role, conjugation of reduced glutathione to a wide number of exogenous and endogenous hydrophobic electrophiles. This isozyme has a high catalytic efficiency with 4-hydroxyalkenals such as 4-hydroxynonenal (4-HNE). This Homo sapiens (Human) protein is Glutathione S-transferase A4 (GSTA4).